Reading from the N-terminus, the 431-residue chain is Tol-Pal system protein TolB (431 aa).

Residues 1 to 26 (MSLMTKLGFRALVASCLITAGSAANA) form the signal peptide. The disordered stretch occupies residues 406-431 (DGSAPPQILSVQGGSVREPSWGPFMQ).

The protein belongs to the TolB family. The Tol-Pal system is composed of five core proteins: the inner membrane proteins TolA, TolQ and TolR, the periplasmic protein TolB and the outer membrane protein Pal. They form a network linking the inner and outer membranes and the peptidoglycan layer.

It is found in the periplasm. Functionally, part of the Tol-Pal system, which plays a role in outer membrane invagination during cell division and is important for maintaining outer membrane integrity. The protein is Tol-Pal system protein TolB of Burkholderia cenocepacia (strain ATCC BAA-245 / DSM 16553 / LMG 16656 / NCTC 13227 / J2315 / CF5610) (Burkholderia cepacia (strain J2315)).